A 205-amino-acid polypeptide reads, in one-letter code: Meiotic nuclear division protein 1 homolog (205 aa).

Serine 2 is modified (N-acetylserine). Positions 83-173 form a coiled coil; sequence KRKLEVLDSQ…EAANRWTDNI (91 aa).

Belongs to the MND1 family. Heterodimer with PSMC3IP/HOP2. MND1-PSMC3IP interacts with DMC1 and RAD51 and binds preferentially to dsDNA.

Its subcellular location is the nucleus. In terms of biological role, required for proper homologous chromosome pairing and efficient cross-over and intragenic recombination during meiosis. Stimulates both DMC1- and RAD51-mediated homologous strand assimilation, which is required for the resolution of meiotic double-strand breaks. This chain is Meiotic nuclear division protein 1 homolog, found in Bos taurus (Bovine).